The primary structure comprises 242 residues: Uridylate kinase (242 aa).

16–19 (KVSG) provides a ligand contact to ATP. Gly58 is a UMP binding site. 2 residues coordinate ATP: Gly59 and Arg63. UMP is bound by residues Asp78 and 139–146 (TGNPFCTT). Thr166, Gln167, Tyr172, and Asp175 together coordinate ATP.

The protein belongs to the UMP kinase family. In terms of assembly, homohexamer.

It is found in the cytoplasm. It carries out the reaction UMP + ATP = UDP + ADP. It functions in the pathway pyrimidine metabolism; CTP biosynthesis via de novo pathway; UDP from UMP (UMPK route): step 1/1. With respect to regulation, inhibited by UTP. Catalyzes the reversible phosphorylation of UMP to UDP. The sequence is that of Uridylate kinase from Rickettsia canadensis (strain McKiel).